The sequence spans 132 residues: Sec-independent protein translocase protein TatB (132 aa).

The chain crosses the membrane as a helical span at residues 2-22; it reads FDGIGFMELLLIGILGLVVLG. Residues 86–132 are disordered; the sequence is LKSAAQSVNRPYKVEDISPASSSAPVDPAPTETKTAETSANSEKPNG. Residues 103-115 are compositionally biased toward low complexity; the sequence is SPASSSAPVDPAP. Polar residues predominate over residues 117-132; that stretch reads ETKTAETSANSEKPNG.

Belongs to the TatB family. As to quaternary structure, the Tat system comprises two distinct complexes: a TatABC complex, containing multiple copies of TatA, TatB and TatC subunits, and a separate TatA complex, containing only TatA subunits. Substrates initially bind to the TatABC complex, which probably triggers association of the separate TatA complex to form the active translocon.

It is found in the cell inner membrane. Its function is as follows. Part of the twin-arginine translocation (Tat) system that transports large folded proteins containing a characteristic twin-arginine motif in their signal peptide across membranes. Together with TatC, TatB is part of a receptor directly interacting with Tat signal peptides. TatB may form an oligomeric binding site that transiently accommodates folded Tat precursor proteins before their translocation. This chain is Sec-independent protein translocase protein TatB, found in Shewanella sediminis (strain HAW-EB3).